The following is a 700-amino-acid chain: MLKMLSFKLLLLAVALGFFEGDAKFGERNEGSGARRRRCLNGNPPKRLKRRDRRMMSQLELLSGGEMLCGGFYPRLSCCLRSDSPGLGRLENKIFSVTNNTECGKLLEEIKCALCSPHSQSLFHSPEREVLERDLVLPLLCKDYCKEFFYTCRGHIPGFLQTTADEFCFYYARKDGGLCFPDFPRKQVRGPASNYLDQMEEYDKVEEISRKHKHNCFCIQEVVSGLRQPVGALHSGDGSQRLFILEKEGYVKILTPEGEIFKEPYLDIHKLVQSGIKGGDERGLLSLAFHPNYKKNGKLYVSYTTNQERWAIGPHDHILRVVEYTVSRKNPHQVDLRTARVFLEVAELHRKHLGGQLLFGPDGFLYIILGDGMITLDDMEEMDGLSDFTGSVLRLDVDTDMCNVPYSIPRSNPHFNSTNQPPEVFAHGLHDPGRCAVDRHPTDININLTILCSDSNGKNRSSARILQIIKGKDYESEPSLLEFKPFSNGPLVGGFVYRGCQSERLYGSYVFGDRNGNFLTLQQSPVTKQWQEKPLCLGTSGSCRGYFSGHILGFGEDELGEVYILSSSKSMTQTHNGKLYKIVDPKRPLMPEECRATVQPAQTLTSECSRLCRNGYCTPTGKCCCSPGWEGDFCRTAKCEPACRHGGVCVRPNKCLCKKGYLGPQCEQVDRNIRRVTRAGILDQIIDMTSYLLDLTSYIV.

Positions Met1 to Gly17 are cleaved as a signal peptide. N-linked (GlcNAc...) asparagine glycosylation is present at Asn99. 11 cysteine pairs are disulfide-bonded: Cys216–Cys536, Cys218–Cys543, Cys402–Cys624, Cys435–Cys452, Cys500–Cys594, Cys608–Cys617, Cys612–Cys623, Cys625–Cys634, Cys639–Cys649, Cys643–Cys655, and Cys657–Cys666. The interaction with SHH zinc binding site stretch occupies residues Leu376–Phe388. Asp383 is a Zn(2+) binding site. Residues Asn416, Asn447, and Asn459 are each glycosylated (N-linked (GlcNAc...) asparagine). EGF-like domains lie at Glu607–Cys634 and Arg635–Glu667.

Belongs to the HHIP family. In terms of assembly, interacts with all three hedgehog family members, SHH, IHH and DHH. In terms of tissue distribution, widely expressed in fetal and adult tissues. Highest expression in adult heart, liver and pancreas, and in fetal kidney.

It localises to the cell membrane. The protein resides in the secreted. The protein localises to the cytoplasm. In terms of biological role, modulates hedgehog signaling in several cell types including brain and lung through direct interaction with members of the hedgehog family. This is Hedgehog-interacting protein (HHIP) from Homo sapiens (Human).